A 479-amino-acid polypeptide reads, in one-letter code: Endo-beta-1,6-galactanase (479 aa).

An N-terminal signal peptide occupies residues 1–20 (MRSIVLPSLALALFSQRARA). An N-linked (GlcNAc...) asparagine glycan is attached at N89. The active-site Proton donor is E210. An N-linked (GlcNAc...) asparagine glycan is attached at N271. E311 serves as the catalytic Nucleophile. Residue N358 is glycosylated (N-linked (GlcNAc...) asparagine).

It carries out the reaction Endohydrolysis of (1-&gt;6)-beta-D-galactosidic linkages in arabinogalactan proteins and (1-&gt;3):(1-&gt;6)-beta-galactans to yield galactose and beta-(1-&gt;6)-galactaobiose as the final products.. Functionally, hydrolyzes galactooligomers with a degree of polymerization higher than 3. Hydrolyzes radish root arabinogalactan-protein. Does not hydrolyze dextran, arabinan, starch, laminarin, beta-1,4- and beta-1,3-galactans, larch wood arabinogalactan or acid-insoluble polygalacturonic acid. The polypeptide is Endo-beta-1,6-galactanase (Hypocrea rufa (Trichoderma viride)).